A 372-amino-acid polypeptide reads, in one-letter code: GRASP65 homolog protein 1 (372 aa).

Met1 carries the post-translational modification N-acetylmethionine. 2 PDZ GRASP-type domains span residues 66 to 183 (SGLR…WTPL) and 188 to 276 (FTYH…YGFL). The tract at residues 66–292 (SGLRIVWVDE…KHCPQQAQQQ (227 aa)) is GRASP. The residue at position 155 (Ser155) is a Phosphoserine. The disordered stretch occupies residues 312 to 372 (VPSAFTAPPV…PPPQKQSSSD (61 aa)).

As to quaternary structure, homodimer. Interacts with BUG1 (via C-terminus), probably forming a heterooligomer consisting of a GRH1 dimer and a BUG1 dimer. Interacts with COPII coat components SEC23, SEC24, SFB2 and SFB3. Post-translationally, N-terminal acetylation; by N-terminal acetyltransferase NatC.

The protein resides in the cytoplasm. Its subcellular location is the golgi apparatus. The protein localises to the cis-Golgi network membrane. In terms of biological role, involved in the spindle assembly checkpoint. Involved in ER to Golgi vesicle-mediated transport by either facilitating USO1-dependent and -independent tethering or increasing target accuracy of fusion events of COPII-coated vesicles. This chain is GRASP65 homolog protein 1 (GRH1), found in Saccharomyces cerevisiae (strain ATCC 204508 / S288c) (Baker's yeast).